A 240-amino-acid chain; its full sequence is MIQIIPAIDIIDGKCVRLTQGDYNQKKEYHSNPVEVAKMFEDAGIQRLHLVDLDGAKKKQIVNYKVLENITAATKLSVDFGGGLQSDEDLKIAFDAGARQITAGSIAVKNPEKVQHWLTQFGKECIILGADTKSGMIAVHGWQETSDLSIQQLMNQFIPFGISYSICTDVAKDGLLQGPSFDLYKQLNEEFKQINWIASGGVAELADIEKLNDMGIYGVIVGKAFYEGRITLQQLAQFNA.

Catalysis depends on aspartate 9, which acts as the Proton acceptor. Aspartate 131 functions as the Proton donor in the catalytic mechanism.

This sequence belongs to the HisA/HisF family.

It localises to the cytoplasm. The catalysed reaction is 1-(5-phospho-beta-D-ribosyl)-5-[(5-phospho-beta-D-ribosylamino)methylideneamino]imidazole-4-carboxamide = 5-[(5-phospho-1-deoxy-D-ribulos-1-ylimino)methylamino]-1-(5-phospho-beta-D-ribosyl)imidazole-4-carboxamide. It functions in the pathway amino-acid biosynthesis; L-histidine biosynthesis; L-histidine from 5-phospho-alpha-D-ribose 1-diphosphate: step 4/9. The chain is 1-(5-phosphoribosyl)-5-[(5-phosphoribosylamino)methylideneamino] imidazole-4-carboxamide isomerase from Cytophaga hutchinsonii (strain ATCC 33406 / DSM 1761 / CIP 103989 / NBRC 15051 / NCIMB 9469 / D465).